A 131-amino-acid polypeptide reads, in one-letter code: MEEAGLCGLRRKADMLCNSESHDILQHQDSNCSATSNKHLLEDEEGSDFITKNRSWVSPVHCTQESRKELPEQEVAPPSGQQALQCNRNKEKVLGKEVLLLMQALNTLLTPEEKLAAVCKKYADLGNSPLL.

Belongs to the taxilin family.

In Pan troglodytes (Chimpanzee), this protein is Putative gamma-taxilin 2 (TXLNGY).